Here is a 109-residue protein sequence, read N- to C-terminus: Non-structural protein ORF4a (109 aa).

In terms of assembly, interacts with host PRKRA/PACT.

It localises to the host cytoplasm. In terms of biological role, dsRNA-binding protein that plays a role in the inhibition of host innate response. Suppresses host PACT-induced activation of RIGI and MDA5 and thereby circumvents the production of type I interferons. Also prevents the activation of host NF-kappa-B. Inhibits the integrated stress response (ISR) in the infected cell by binding to dsRNA and inhibiting EIF2AK2-mediated phosphorylation of EIF2S1/eIF2-alpha. Stress granule formation is thus inhibited, which allows protein synthesis and viral replication. The protein is Non-structural protein ORF4a (ORF4a) of Middle East respiratory syndrome-related coronavirus (isolate United Kingdom/H123990006/2012) (MERS-CoV).